Here is a 152-residue protein sequence, read N- to C-terminus: UPF0266 membrane protein plu2700 (152 aa).

The next 3 membrane-spanning stretches (helical) occupy residues 6–26, 45–65, and 67–87; these read IALT…EFVV, IDAL…ITVY, and SRLT…IAYI.

The protein belongs to the UPF0266 family.

It localises to the cell inner membrane. This is UPF0266 membrane protein plu2700 from Photorhabdus laumondii subsp. laumondii (strain DSM 15139 / CIP 105565 / TT01) (Photorhabdus luminescens subsp. laumondii).